We begin with the raw amino-acid sequence, 506 residues long: Cysteine--tRNA ligase (506 aa).

Cysteine 43 provides a ligand contact to Zn(2+). The 'HIGH' region signature appears at 45-55 (VTVYDLCHLGH). The Zn(2+) site is built by cysteine 237, histidine 262, and glutamate 266. Residues 294–298 (KMSKS) carry the 'KMSKS' region motif. Residue lysine 297 coordinates ATP.

It belongs to the class-I aminoacyl-tRNA synthetase family. Monomer. It depends on Zn(2+) as a cofactor.

The protein resides in the cytoplasm. It carries out the reaction tRNA(Cys) + L-cysteine + ATP = L-cysteinyl-tRNA(Cys) + AMP + diphosphate. The sequence is that of Cysteine--tRNA ligase from Synechococcus sp. (strain JA-3-3Ab) (Cyanobacteria bacterium Yellowstone A-Prime).